The following is a 115-amino-acid chain: MKSGVCLCVVMAVLAAGALAQPVVPAEATDPVEQRAQEAPRRQLRAVLRTDGEPRARLGALLARYIQQVRKAPSGRMSVLKNLQSLDPSHRISDRDYMGWMDFGRRSAEDYEYPS.

The N-terminal stretch at 1-20 (MKSGVCLCVVMAVLAAGALA) is a signal peptide. A propeptide spanning residues 21-70 (QPVVPAEATDPVEQRAQEAPRRQLRAVLRTDGEPRARLGALLARYIQQVR) is cleaved from the precursor. Y97 is modified (sulfotyrosine). The residue at position 103 (F103) is a Phenylalanine amide. Residues 107–115 (SAEDYEYPS) constitute a propeptide that is removed on maturation. Y111 and Y113 each carry sulfotyrosine.

The protein belongs to the gastrin/cholecystokinin family. Binds to CCK-A receptors in the pancreas and CCK-B receptors in the brain. The precursor is cleaved by proteases to produce a number of active cholecystokinins. Expressed and secreted by discrete enteroendocrine cells that reside as single cells scattered among enterocytes in the mucosa of the small intestine. Released into the blood following ingestion of a meal.

The protein resides in the secreted. Functionally, this peptide hormone induces gall bladder contraction and the release of pancreatic enzymes in the gut. Its function in the brain is not clear. Binding to CCK-A receptors stimulates amylase release from the pancreas, binding to CCK-B receptors stimulates gastric acid secretion. The protein is Cholecystokinin (Cck) of Mus musculus (Mouse).